Here is a 267-residue protein sequence, read N- to C-terminus: Thiamine thiazole synthase (267 aa).

Residues serine 41, 60 to 61, glycine 68, valine 132, and 160 to 162 contribute to the NAD(+) site; these read ER and HVD. 2 residues coordinate Fe cation: aspartate 162 and histidine 177. Residue methionine 227 coordinates NAD(+). Arginine 237 is a binding site for glycine.

The protein belongs to the THI4 family. In terms of assembly, homooctamer; tetramer of dimers. Fe(2+) serves as cofactor.

The catalysed reaction is hydrogen sulfide + glycine + NAD(+) = ADP-5-ethyl-4-methylthiazole-2-carboxylate + nicotinamide + 3 H2O + H(+). It functions in the pathway cofactor biosynthesis; thiamine diphosphate biosynthesis. Involved in the biosynthesis of the thiazole moiety of thiamine. Catalyzes the conversion of NAD and glycine to adenosine diphosphate 5-(2-hydroxyethyl)-4-methylthiazole-2-carboxylate (ADT), an adenylated thiazole intermediate, using free sulfide as a source of sulfur. The sequence is that of Thiamine thiazole synthase from Saccharolobus solfataricus (strain ATCC 35092 / DSM 1617 / JCM 11322 / P2) (Sulfolobus solfataricus).